Consider the following 828-residue polypeptide: Periplasmic nitrate reductase (828 aa).

Positions 1–31 form a signal peptide, tat-type signal; that stretch reads MKLSRRSFMKANAVAAAAAAAGLSVPGVARA. The region spanning 39–95 is the 4Fe-4S Mo/W bis-MGD-type domain; sequence IKWDKAPCRFCGTGCGVLVGTQQGRVVACQGDPDAPVNRGLNCIKGYFLPKIMYGKD. [4Fe-4S] cluster is bound by residues C46, C49, C53, and C81. Mo-bis(molybdopterin guanine dinucleotide)-binding positions include K83, Q150, N175, C179, 212 to 219, 243 to 247, 262 to 264, M372, Q376, N482, 508 to 509, K531, D558, and 718 to 727; these read WGSNMAEM, STFQH, QSD, SD, and TGRVLEHWHT. F794 serves as a coordination point for substrate. Residues N802 and K819 each contribute to the Mo-bis(molybdopterin guanine dinucleotide) site.

Belongs to the prokaryotic molybdopterin-containing oxidoreductase family. NasA/NapA/NarB subfamily. As to quaternary structure, component of the periplasmic nitrate reductase NapAB complex composed of NapA and NapB. It depends on [4Fe-4S] cluster as a cofactor. Mo-bis(molybdopterin guanine dinucleotide) serves as cofactor. Post-translationally, predicted to be exported by the Tat system. The position of the signal peptide cleavage has not been experimentally proven.

It is found in the periplasm. It catalyses the reaction 2 Fe(II)-[cytochrome] + nitrate + 2 H(+) = 2 Fe(III)-[cytochrome] + nitrite + H2O. Catalytic subunit of the periplasmic nitrate reductase complex NapAB. Receives electrons from NapB and catalyzes the reduction of nitrate to nitrite. This chain is Periplasmic nitrate reductase, found in Salmonella dublin (strain CT_02021853).